A 598-amino-acid chain; its full sequence is UvrABC system protein C (598 aa).

Residues Asp-14–Ile-91 enclose the GIY-YIG domain. The UVR domain occupies Asp-196–Met-231.

It belongs to the UvrC family. Interacts with UvrB in an incision complex.

Its subcellular location is the cytoplasm. Functionally, the UvrABC repair system catalyzes the recognition and processing of DNA lesions. UvrC both incises the 5' and 3' sides of the lesion. The N-terminal half is responsible for the 3' incision and the C-terminal half is responsible for the 5' incision. The polypeptide is UvrABC system protein C (Streptococcus pyogenes serotype M5 (strain Manfredo)).